The primary structure comprises 372 residues: Probable butyrate kinase (372 aa).

This sequence belongs to the acetokinase family.

The protein localises to the cytoplasm. It catalyses the reaction butanoate + ATP = butanoyl phosphate + ADP. The sequence is that of Probable butyrate kinase from Oleidesulfovibrio alaskensis (strain ATCC BAA-1058 / DSM 17464 / G20) (Desulfovibrio alaskensis).